Reading from the N-terminus, the 189-residue chain is Peptidyl-tRNA hydrolase (189 aa).

Y14 is a binding site for tRNA. H19 (proton acceptor) is an active-site residue. TRNA-binding residues include F64, N66, and N112.

It belongs to the PTH family. In terms of assembly, monomer.

The protein localises to the cytoplasm. The enzyme catalyses an N-acyl-L-alpha-aminoacyl-tRNA + H2O = an N-acyl-L-amino acid + a tRNA + H(+). Hydrolyzes ribosome-free peptidyl-tRNAs (with 1 or more amino acids incorporated), which drop off the ribosome during protein synthesis, or as a result of ribosome stalling. Functionally, catalyzes the release of premature peptidyl moieties from peptidyl-tRNA molecules trapped in stalled 50S ribosomal subunits, and thus maintains levels of free tRNAs and 50S ribosomes. This is Peptidyl-tRNA hydrolase from Rhizorhabdus wittichii (strain DSM 6014 / CCUG 31198 / JCM 15750 / NBRC 105917 / EY 4224 / RW1) (Sphingomonas wittichii).